Reading from the N-terminus, the 474-residue chain is Trehalose-6-phosphate synthase (474 aa).

Position 10 (Arg-10) interacts with D-glucose 6-phosphate. UDP-alpha-D-glucose is bound at residue Gly-22–Gly-23. Tyr-77 and Asp-131 together coordinate D-glucose 6-phosphate. Residues Arg-263 and Lys-268 each contribute to the UDP-alpha-D-glucose site. D-glucose 6-phosphate is bound at residue Arg-301. UDP-alpha-D-glucose is bound by residues Phe-340 and Leu-366–Glu-370.

The protein belongs to the glycosyltransferase 20 family. In terms of assembly, homotetramer.

It carries out the reaction D-glucose 6-phosphate + UDP-alpha-D-glucose = alpha,alpha-trehalose 6-phosphate + UDP + H(+). It functions in the pathway glycan biosynthesis; trehalose biosynthesis. In terms of biological role, probably involved in the osmoprotection via the biosynthesis of trehalose. Catalyzes the transfer of glucose from UDP-alpha-D-glucose (UDP-Glc) to D-glucose 6-phosphate (Glc-6-P) to form trehalose-6-phosphate. Acts with retention of the anomeric configuration of the UDP-sugar donor. The sequence is that of Trehalose-6-phosphate synthase from Cronobacter sakazakii (strain ATCC BAA-894) (Enterobacter sakazakii).